The sequence spans 265 residues: 5'-nucleotidase SurE (265 aa).

Aspartate 8, aspartate 9, serine 39, and asparagine 96 together coordinate a divalent metal cation.

This sequence belongs to the SurE nucleotidase family. Requires a divalent metal cation as cofactor.

It is found in the cytoplasm. The catalysed reaction is a ribonucleoside 5'-phosphate + H2O = a ribonucleoside + phosphate. Its function is as follows. Nucleotidase that shows phosphatase activity on nucleoside 5'-monophosphates. The polypeptide is 5'-nucleotidase SurE (Dehalococcoides mccartyi (strain CBDB1)).